The chain runs to 398 residues: Cyclic GMP-AMP synthase-like receptor (398 aa).

ATP-binding positions include Ser-57 and 69 to 71 (EFD). Mg(2+) contacts are provided by Glu-69, Asp-71, and Asp-192. Residues Asp-192 and 240–247 (SLSFQEQE) each bind GTP. ATP contacts are provided by residues 244 to 247 (QEQE), Lys-265, and 277 to 281 (SYYIK). Residues Ile-288, Glu-289, and Asp-292 each coordinate Mn(2+).

This sequence belongs to the mab-21 family. The cofactor is Mg(2+). Mn(2+) is required as a cofactor.

The enzyme catalyses GTP + ATP = 2',3'-cGAMP + 2 diphosphate. It catalyses the reaction GTP + ATP = pppGp(2'-5')A + diphosphate. The catalysed reaction is pppGp(2'-5')A = 2',3'-cGAMP + diphosphate. Its activity is regulated as follows. The enzyme activity is specifically activated by double-stranded RNA (dsRNA). In terms of biological role, nucleotidyltransferase that catalyzes the formation of cyclic GMP-AMP (2',3'-cGAMP) from ATP and GTP and plays a key role in innate immunity. Acts as a key sensor of double-stranded RNA (dsRNA), the presence of dsRNA in the cytoplasm being a danger signal that triggers the immune responses. Directly binds dsRNA, activating the nucleotidyltransferase activity, leading to synthesis of 2',3'-cGAMP, a second messenger that binds to and activates Sting, thereby triggering the antiviral immune response via activation of the NF-kappa-B transcription factor Rel (Relish). The protein is Cyclic GMP-AMP synthase-like receptor of Tribolium castaneum (Red flour beetle).